Consider the following 218-residue polypeptide: tRNA (guanosine(18)-2'-O)-methyltransferase (218 aa).

Residues T111 and I154 each contribute to the S-adenosyl-L-methionine site.

Belongs to the class IV-like SAM-binding methyltransferase superfamily. RNA methyltransferase TrmH family.

It catalyses the reaction guanosine(18) in tRNA + S-adenosyl-L-methionine = 2'-O-methylguanosine(18) in tRNA + S-adenosyl-L-homocysteine + H(+). Its function is as follows. Catalyzes the 2'-O methylation of guanosine at position 18 in tRNA. The polypeptide is tRNA (guanosine(18)-2'-O)-methyltransferase (Borreliella burgdorferi (strain ATCC 35210 / DSM 4680 / CIP 102532 / B31) (Borrelia burgdorferi)).